A 120-amino-acid polypeptide reads, in one-letter code: ATP synthase subunit a (120 aa).

4 consecutive transmembrane segments (helical) span residues 2 to 22, 29 to 49, 59 to 79, and 94 to 116; these read FFYS…YSYL, FFPF…VGIV, LNIT…LGFY, and IPFV…RSVG.

It belongs to the ATPase A chain family. In terms of assembly, F-type ATPases have 2 components, CF(1) - the catalytic core - and CF(0) - the membrane proton channel. CF(1) has five subunits: alpha(3), beta(3), gamma(1), delta(1), epsilon(1). CF(0) has three main subunits: a, b and c.

The protein localises to the mitochondrion inner membrane. Mitochondrial membrane ATP synthase (F(1)F(0) ATP synthase or Complex V) produces ATP from ADP in the presence of a proton gradient across the membrane which is generated by electron transport complexes of the respiratory chain. F-type ATPases consist of two structural domains, F(1) - containing the extramembraneous catalytic core and F(0) - containing the membrane proton channel, linked together by a central stalk and a peripheral stalk. During catalysis, ATP synthesis in the catalytic domain of F(1) is coupled via a rotary mechanism of the central stalk subunits to proton translocation. Key component of the proton channel; it may play a direct role in the translocation of protons across the membrane. The sequence is that of ATP synthase subunit a (ATP6) from Naegleria fowleri (Brain eating amoeba).